A 1024-amino-acid polypeptide reads, in one-letter code: Zn(2)-C6 fungal-type transcription factor FTF1a (1024 aa).

The segment at residues 137 to 164 (CIACRRKKVRCSGEKPACKHCLHSHIPC) is a DNA-binding region (zn(2)-C6 fungal-type).

It localises to the nucleus. Its function is as follows. Zn(2)-C6 fungal-type transcription factor that has a role in the establishment of the fungus within the plant and/or the progress of the disease. Regulates the expression of virulence factors such as SIX1 and SIX6. The protein is Zn(2)-C6 fungal-type transcription factor FTF1a of Fusarium oxysporum f. sp. lycopersici (strain 4287 / CBS 123668 / FGSC 9935 / NRRL 34936) (Fusarium vascular wilt of tomato).